Here is a 29-residue protein sequence, read N- to C-terminus: YCQKWMWTCDSKRKCCEDMVCQLWCKKRL.

Intrachain disulfides connect C2–C16, C9–C21, and C15–C25.

It belongs to the neurotoxin 30 (phrixotoxin) family. Expressed by the venom gland.

The protein localises to the secreted. Inhibits voltage-gated sodium channels Nav1.1/SCN1A (IC(50)=630 nM), Nav1.2/SCN2A (IC(50)=230 nM), Nav1.3/SCN3A (IC(50)=770 nM), Nav1.4/SCN4A (IC(50)=1290 nM), Nav1.6/SCN8A (IC(50)=630 nM), Nav1.7/SCN9A (IC(50)=15.3-1000 nM) and potassium channels Kv11.1/KCNH2 (IC(50)=4.2 uM). The protein is Beta-theraphotoxin-Gr1a of Grammostola rosea (Chilean rose tarantula).